A 161-amino-acid polypeptide reads, in one-letter code: Allophycocyanin beta chain (161 aa).

Asn71 is modified (N4-methylasparagine). Cys81 is a (2R,3E)-phycocyanobilin binding site.

This sequence belongs to the phycobiliprotein family. As to quaternary structure, heterodimer of an alpha and a beta chain. Post-translationally, contains one covalently linked phycocyanobilin chromophore.

The protein localises to the cellular thylakoid membrane. Its function is as follows. Light-harvesting photosynthetic bile pigment-protein from the phycobiliprotein complex. Allophycocyanin has a maximum absorption at approximately 650 nanometers. This Anabaena variabilis protein is Allophycocyanin beta chain (apcB).